A 139-amino-acid chain; its full sequence is Large ribosomal subunit protein uL16 (139 aa).

Residues 1–17 (MLMPKRVKYRKTQRGRM) show a composition bias toward basic residues. The tract at residues 1–24 (MLMPKRVKYRKTQRGRMKGNSGRG) is disordered.

The protein belongs to the universal ribosomal protein uL16 family. In terms of assembly, part of the 50S ribosomal subunit.

Functionally, binds 23S rRNA and is also seen to make contacts with the A and possibly P site tRNAs. In Pelodictyon phaeoclathratiforme (strain DSM 5477 / BU-1), this protein is Large ribosomal subunit protein uL16.